A 78-amino-acid polypeptide reads, in one-letter code: Apolipoprotein C-I (78 aa).

The N-terminal stretch at 1–26 is a signal peptide; that stretch reads MRLILCLPVLVVVLLMVLEGPAPAQG.

It belongs to the apolipoprotein C1 family.

Its subcellular location is the secreted. Its function is as follows. Inhibitor of lipoprotein binding to the low density lipoprotein (LDL) receptor, LDL receptor-related protein, and very low density lipoprotein (VLDL) receptor. Associates with high density lipoproteins (HDL) and the triacylglycerol-rich lipoproteins in the plasma and makes up about 10% of the protein of the VLDL and 2% of that of HDL. Appears to interfere directly with fatty acid uptake and is also the major plasma inhibitor of cholesteryl ester transfer protein (CETP). Binds free fatty acids and reduces their intracellular esterification. Modulates the interaction of APOE with beta-migrating VLDL and inhibits binding of beta-VLDL to the LDL receptor-related protein. In Acinonyx jubatus (Cheetah), this protein is Apolipoprotein C-I (APOC1).